A 275-amino-acid chain; its full sequence is 6-deoxy-6-sulfo-D-fructose transketolase subunit SqwG (275 aa).

It belongs to the transketolase family. As to quaternary structure, forms a complex with SqwH. Thiamine diphosphate is required as a cofactor.

It carries out the reaction 6-deoxy-6-sulfo-D-fructose + D-glyceraldehyde 3-phosphate = 4-deoxy-4-sulfo-D-erythrose + D-xylulose 5-phosphate. The catalysed reaction is 4-deoxy-4-sulfo-D-erythrulose + D-glyceraldehyde 3-phosphate = sulfoacetaldehyde + D-xylulose 5-phosphate. In terms of biological role, part of the sulfo-TK pathway, a D-sulfoquinovose degradation pathway that produces 2-hydroxyethane-1-sulfonate (isethionate). Catalyzes two steps of the pathway: the formation of 4-deoxy-4-sulfoerythrose (SE) and xylulose 5-phosphate from 6-deoxy-6-sulfo-D-fructose (SF) and glyceraldehyde 3-phosphate, and the formation of sulfoacetaldehyde (SA) and xylulose 5-phosphate from 4-deoxy-4-sulfo-D-erythrulose (SEu) and glyceraldehyde 3-phosphate. This chain is 6-deoxy-6-sulfo-D-fructose transketolase subunit SqwG, found in Clostridium sp. (strain MSTE9).